Here is a 137-residue protein sequence, read N- to C-terminus: ATP synthase epsilon chain, sodium ion specific (137 aa).

This sequence belongs to the ATPase epsilon chain family. F-type ATPases have 2 components, CF(1) - the catalytic core - and CF(0) - the membrane proton channel. CF(1) has five subunits: alpha(3), beta(3), gamma(1), delta(1), epsilon(1). CF(0) has three main subunits: a, b and c.

The protein resides in the cell inner membrane. Its function is as follows. Produces ATP from ADP in the presence of a sodium gradient across the membrane. The sequence is that of ATP synthase epsilon chain, sodium ion specific (atpC) from Propionigenium modestum.